A 591-amino-acid polypeptide reads, in one-letter code: General transcription and DNA repair factor IIH subunit TFB1-1 (591 aa).

2 BSD domains span residues 112 to 166 (STSS…GKDS) and 191 to 243 (RTNR…YLYS).

The protein belongs to the TFB1 family. As to quaternary structure, component of the 7-subunit TFIIH core complex composed of XPB, XPD, TFB1/GTF2H1, GTF2H2/P44, TFB4/GTF2H3, TFB2/GTF2H4 and TFB5/GTF2H5, which is active in NER. The core complex associates with the 3-subunit CDK-activating kinase (CAK) module composed of CYCH1/cyclin H1, CDKD and MAT1/At4g30820 to form the 10-subunit holoenzyme (holo-TFIIH) active in transcription.

It localises to the nucleus. In terms of biological role, component of the general transcription and DNA repair factor IIH (TFIIH) core complex, which is involved in general and transcription-coupled nucleotide excision repair (NER) of damaged DNA and, when complexed to CAK, in RNA transcription by RNA polymerase II. In NER, TFIIH acts by opening DNA around the lesion to allow the excision of the damaged oligonucleotide and its replacement by a new DNA fragment. In transcription, TFIIH has an essential role in transcription initiation. When the pre-initiation complex (PIC) has been established, TFIIH is required for promoter opening and promoter escape. Phosphorylation of the C-terminal tail (CTD) of the largest subunit of RNA polymerase II by the kinase module CAK controls the initiation of transcription. The chain is General transcription and DNA repair factor IIH subunit TFB1-1 from Arabidopsis thaliana (Mouse-ear cress).